Reading from the N-terminus, the 413-residue chain is Arginine biosynthesis bifunctional protein ArgJ (413 aa).

Residues T160, K186, T197, E284, N408, and S413 each coordinate substrate. The Nucleophile role is filled by T197.

Belongs to the ArgJ family. As to quaternary structure, heterotetramer of two alpha and two beta chains.

The protein resides in the cytoplasm. It carries out the reaction N(2)-acetyl-L-ornithine + L-glutamate = N-acetyl-L-glutamate + L-ornithine. The catalysed reaction is L-glutamate + acetyl-CoA = N-acetyl-L-glutamate + CoA + H(+). Its pathway is amino-acid biosynthesis; L-arginine biosynthesis; L-ornithine and N-acetyl-L-glutamate from L-glutamate and N(2)-acetyl-L-ornithine (cyclic): step 1/1. The protein operates within amino-acid biosynthesis; L-arginine biosynthesis; N(2)-acetyl-L-ornithine from L-glutamate: step 1/4. Functionally, catalyzes two activities which are involved in the cyclic version of arginine biosynthesis: the synthesis of N-acetylglutamate from glutamate and acetyl-CoA as the acetyl donor, and of ornithine by transacetylation between N(2)-acetylornithine and glutamate. The sequence is that of Arginine biosynthesis bifunctional protein ArgJ from Burkholderia mallei (strain ATCC 23344).